The following is a 377-amino-acid chain: P2Y purinoceptor 2 (377 aa).

The Extracellular portion of the chain corresponds to Met1–Lys32. 2 N-linked (GlcNAc...) asparagine glycosylation sites follow: Asn9 and Asn13. A helical membrane pass occupies residues Tyr33–Leu59. At Cys60–Thr70 the chain is on the cytoplasmic side. Residues Tyr71–Tyr93 traverse the membrane as a helical segment. Topologically, residues Ala94 to Arg110 are extracellular. Residues Cys106 and Cys183 are joined by a disulfide bond. A helical transmembrane segment spans residues Phe111–Val129. The Cytoplasmic segment spans residues His130–Arg152. The helical transmembrane segment at Val153–Val172 threads the bilayer. Over Thr173–Arg194 the chain is Extracellular. Residues Phe195–Leu220 form a helical membrane-spanning segment. The Cytoplasmic segment spans residues Met221 to Thr246. The helical transmembrane segment at Ile247–Tyr269 threads the bilayer. At Ser270–Ala287 the chain is on the extracellular side. The helical transmembrane segment at Tyr288 to Ala309 threads the bilayer. The Cytoplasmic portion of the chain corresponds to Gly310–Leu377. The tract at residues Arg318–Leu377 is disordered. A compositionally biased stretch (basic and acidic residues) spans Arg339–Glu363.

Belongs to the G-protein coupled receptor 1 family. As to expression, spleen, testis, kidney, liver, lung, heart and brain.

It is found in the cell membrane. Its function is as follows. Receptor for ATP and UTP coupled to G-proteins that activate a phosphatidylinositol-calcium second messenger system. The affinity range is UTP = ATP &gt; ATP-gamma-S &gt;&gt; 2-methylthio-ATP = ADP. This Homo sapiens (Human) protein is P2Y purinoceptor 2 (P2RY2).